A 368-amino-acid chain; its full sequence is Probable dual-specificity RNA methyltransferase RlmN (368 aa).

Glu108 serves as the catalytic Proton acceptor. One can recognise a Radical SAM core domain in the interval 114–345 (HAYGNSVCVS…VTVRRGLGAD (232 aa)). The cysteines at positions 121 and 350 are disulfide-linked. Residues Cys128, Cys132, and Cys135 each contribute to the [4Fe-4S] cluster site. Residues 175 to 176 (GE), Ser207, 230 to 232 (SLH), and Asn307 contribute to the S-adenosyl-L-methionine site. Catalysis depends on Cys350, which acts as the S-methylcysteine intermediate.

The protein belongs to the radical SAM superfamily. RlmN family. [4Fe-4S] cluster is required as a cofactor.

The protein localises to the cytoplasm. It carries out the reaction adenosine(2503) in 23S rRNA + 2 reduced [2Fe-2S]-[ferredoxin] + 2 S-adenosyl-L-methionine = 2-methyladenosine(2503) in 23S rRNA + 5'-deoxyadenosine + L-methionine + 2 oxidized [2Fe-2S]-[ferredoxin] + S-adenosyl-L-homocysteine. The enzyme catalyses adenosine(37) in tRNA + 2 reduced [2Fe-2S]-[ferredoxin] + 2 S-adenosyl-L-methionine = 2-methyladenosine(37) in tRNA + 5'-deoxyadenosine + L-methionine + 2 oxidized [2Fe-2S]-[ferredoxin] + S-adenosyl-L-homocysteine. Specifically methylates position 2 of adenine 2503 in 23S rRNA and position 2 of adenine 37 in tRNAs. This chain is Probable dual-specificity RNA methyltransferase RlmN, found in Pelotomaculum thermopropionicum (strain DSM 13744 / JCM 10971 / SI).